Reading from the N-terminus, the 396-residue chain is D-alanine--D-alanine ligase (396 aa).

The 207-residue stretch at 141 to 347 folds into the ATP-grasp domain; it reads KMLWQAAGLP…PQDLMAQLLS (207 aa). 174-229 serves as a coordination point for ATP; it reads ETRLGYPLFVKPAQAGSSVGASAVQTRAPLIPAIEAAFQWDEVVLVERYVRAREIE. 3 residues coordinate Mg(2+): Asp301, Glu314, and Asn316. The interval 374–396 is disordered; the sequence is AAHDPDAQGDDWDQRDSNPLPTA.

This sequence belongs to the D-alanine--D-alanine ligase family. Mg(2+) serves as cofactor. Mn(2+) is required as a cofactor.

The protein resides in the cytoplasm. It catalyses the reaction 2 D-alanine + ATP = D-alanyl-D-alanine + ADP + phosphate + H(+). It participates in cell wall biogenesis; peptidoglycan biosynthesis. Its function is as follows. Cell wall formation. The protein is D-alanine--D-alanine ligase of Treponema pallidum (strain Nichols).